The following is a 336-amino-acid chain: Dihydroorotate dehydrogenase (quinone) (336 aa).

FMN contacts are provided by residues 62–66 (AGLDK) and Thr86. Lys66 provides a ligand contact to substrate. 111–115 (NRMGF) lines the substrate pocket. FMN-binding residues include Asn139 and Asn172. Asn172 serves as a coordination point for substrate. Ser175 functions as the Nucleophile in the catalytic mechanism. Asn177 serves as a coordination point for substrate. The FMN site is built by Lys217 and Thr245. 246–247 (NT) lines the substrate pocket. FMN contacts are provided by residues Gly268, Gly297, and 318-319 (YS).

Belongs to the dihydroorotate dehydrogenase family. Type 2 subfamily. Monomer. FMN is required as a cofactor.

Its subcellular location is the cell membrane. The catalysed reaction is (S)-dihydroorotate + a quinone = orotate + a quinol. It participates in pyrimidine metabolism; UMP biosynthesis via de novo pathway; orotate from (S)-dihydroorotate (quinone route): step 1/1. Its function is as follows. Catalyzes the conversion of dihydroorotate to orotate with quinone as electron acceptor. This Pectobacterium atrosepticum (strain SCRI 1043 / ATCC BAA-672) (Erwinia carotovora subsp. atroseptica) protein is Dihydroorotate dehydrogenase (quinone).